The chain runs to 284 residues: MQNQKTVKIGNIDVANDKPFTLFAGMNVLESRDLAMRMCETYVEITDRLGIPYVFKASFDKANRSSVHSYRGPGMEEGLKIFQELKDTFGVKIITDIHTEAQAQPVADVVDVIQLPAFLARQTDLVETMARTGAVINVKKPQFMSPDQVGNIVDKFAECGNENIILCERGSCMGYDNLVVDMLGFGVMKKVSNGSPIIFDVTHSLQNRDPSGKASGGRRSQTVELAKAGLATGIAGLFIEAHPTPDKALCDGPSALPLDQLEPFLKQMKALDDLIKGFEHIDIK.

The protein belongs to the KdsA family.

It localises to the cytoplasm. It catalyses the reaction D-arabinose 5-phosphate + phosphoenolpyruvate + H2O = 3-deoxy-alpha-D-manno-2-octulosonate-8-phosphate + phosphate. Its pathway is carbohydrate biosynthesis; 3-deoxy-D-manno-octulosonate biosynthesis; 3-deoxy-D-manno-octulosonate from D-ribulose 5-phosphate: step 2/3. It functions in the pathway bacterial outer membrane biogenesis; lipopolysaccharide biosynthesis. The sequence is that of 2-dehydro-3-deoxyphosphooctonate aldolase from Aliivibrio salmonicida (strain LFI1238) (Vibrio salmonicida (strain LFI1238)).